The primary structure comprises 1748 residues: RANBP2-like and GRIP domain-containing protein 1 (1748 aa).

The residue at position 14 (threonine 14) is a Phosphothreonine. 3 TPR repeats span residues 51 to 84 (PRAHRFLGLLYELEENTEKAVECYRRSLELNPPQ), 575 to 608 (QKMGRGLNSSYDQQEYIGRSVHYWKKVLPLLKII), and 639 to 672 (EDAHITFAILDAVHGNIEDAVTAFESIKSVVSYW). The segment at 751–796 (GPLYKNGSLRNADSEIKHSTPSPTKYSLSPSKSYKYSPKTPPRWAE) is disordered. The segment covering 769-788 (STPSPTKYSLSPSKSYKYSP) has biased composition (low complexity). Residues 1021-1157 (HFEPVVQMPE…FEECQRLLLD (137 aa)) enclose the RanBD1 1 domain. Disordered regions lie at residues 1198-1233 (TKVTEEENKGSGTGAAGASDTTIKPNPENTGPTLEW) and 1291-1316 (AKLNQSGTSVGTDEESDVTQEEERDG). Polar residues predominate over residues 1220 to 1229 (IKPNPENTGP). The span at 1302–1314 (TDEESDVTQEEER) shows a compositional bias: acidic residues. The region spanning 1318 to 1454 (YFEPVVPLPD…FDEAKTAQEK (137 aa)) is the RanBD1 2 domain. Positions 1565 to 1578 (NDSETSSVAQSGSE) are enriched in polar residues. Residues 1565–1606 (NDSETSSVAQSGSESKVEPKKCELSKNSDIEQSSDSKVKNLS) form a disordered region. Residues 1579-1602 (SKVEPKKCELSKNSDIEQSSDSKV) show a composition bias toward basic and acidic residues. Residues 1685 to 1735 (QEESAANVEHLKNVLLQFIFLKPGSERESLLPVINTMLQLSPEEKGKLAAV) form the GRIP domain.

This is RANBP2-like and GRIP domain-containing protein 1 (RGPD1) from Homo sapiens (Human).